The following is a 382-amino-acid chain: uncharacterized protein (382 aa).

12 helical membrane passes run 14-34 (GLLL…LWLA), 45-65 (VVSS…GYVI), 79-99 (FIFA…SWLA), 102-122 (FVAG…LMCS), 131-151 (LLAA…LLVS), 157-177 (LMSV…PLLF), 204-224 (LGVN…GLMP), 235-255 (ASIG…QWPI), 270-290 (VQVF…AMAP), 291-311 (ALFI…AWAC), 325-345 (ALLL…AMLM), and 348-368 (FSDN…LLML).

It belongs to the major facilitator superfamily. YcaD (TC 2.A.1.26) family.

It localises to the cell inner membrane. This is an uncharacterized protein from Escherichia coli O6:K15:H31 (strain 536 / UPEC).